The primary structure comprises 339 residues: UDP-3-O-acylglucosamine N-acyltransferase (339 aa).

The active-site Proton acceptor is histidine 248.

The protein belongs to the transferase hexapeptide repeat family. LpxD subfamily. In terms of assembly, homotrimer.

The enzyme catalyses a UDP-3-O-[(3R)-3-hydroxyacyl]-alpha-D-glucosamine + a (3R)-hydroxyacyl-[ACP] = a UDP-2-N,3-O-bis[(3R)-3-hydroxyacyl]-alpha-D-glucosamine + holo-[ACP] + H(+). It participates in bacterial outer membrane biogenesis; LPS lipid A biosynthesis. Catalyzes the N-acylation of UDP-3-O-acylglucosamine using 3-hydroxyacyl-ACP as the acyl donor. Is involved in the biosynthesis of lipid A, a phosphorylated glycolipid that anchors the lipopolysaccharide to the outer membrane of the cell. The protein is UDP-3-O-acylglucosamine N-acyltransferase of Caulobacter vibrioides (strain NA1000 / CB15N) (Caulobacter crescentus).